The chain runs to 397 residues: Aromatic-amino-acid aminotransferase (397 aa).

Residues Gly-34, Tyr-66, Trp-131, and Asn-184 each contribute to the substrate site. An N6-(pyridoxal phosphate)lysine modification is found at Lys-247. Residues Arg-281 and Arg-375 each coordinate substrate.

Belongs to the class-I pyridoxal-phosphate-dependent aminotransferase family. In terms of assembly, homodimer. The cofactor is pyridoxal 5'-phosphate.

It localises to the cytoplasm. The enzyme catalyses an aromatic L-alpha-amino acid + 2-oxoglutarate = an aromatic oxo-acid + L-glutamate. It catalyses the reaction (3S)-3-methyl-L-phenylalanine + 2-oxoglutarate = (3S)-2-oxo-3-phenylbutanoate + L-glutamate. The protein operates within amino-acid biosynthesis; L-phenylalanine biosynthesis; L-phenylalanine from phenylpyruvate (ArAT route): step 1/1. It functions in the pathway amino-acid biosynthesis; L-tyrosine biosynthesis; L-tyrosine from (4-hydroxyphenyl)pyruvate: step 1/1. In terms of biological role, broad-specificity enzyme that catalyzes the transamination of 2-ketoisocaproate, p-hydroxyphenylpyruvate, and phenylpyruvate to yield leucine, tyrosine, and phenylalanine, respectively. In vitro, is able to catalyze the conversion of beta-methyl phenylpyruvate to the nonproteinogenic amino acid (2S,3S)-beta-methyl-phenylalanine, a building block of the antibiotic mannopeptimycin produced by Streptomyces hygroscopicus NRRL3085. This is Aromatic-amino-acid aminotransferase (tyrB) from Escherichia coli (strain K12).